The chain runs to 499 residues: UPF0159 protein Ta1429 (499 aa).

2 consecutive ThyX domains span residues 1–246 and 271–476; these read MIDR…ALSQ and EKVR…IKFV.

It belongs to the UPF0159 family.

The sequence is that of UPF0159 protein Ta1429 from Thermoplasma acidophilum (strain ATCC 25905 / DSM 1728 / JCM 9062 / NBRC 15155 / AMRC-C165).